The chain runs to 398 residues: Phosphoglycerate kinase (398 aa).

Substrate-binding positions include 23 to 25, R38, 61 to 64, R122, and R155; these read DFN and HLGK. ATP is bound by residues K206, G297, E328, and 354 to 357; that span reads GGDS.

The protein belongs to the phosphoglycerate kinase family. As to quaternary structure, monomer.

The protein resides in the cytoplasm. The enzyme catalyses (2R)-3-phosphoglycerate + ATP = (2R)-3-phospho-glyceroyl phosphate + ADP. Its pathway is carbohydrate degradation; glycolysis; pyruvate from D-glyceraldehyde 3-phosphate: step 2/5. The polypeptide is Phosphoglycerate kinase (Clostridium kluyveri (strain NBRC 12016)).